A 328-amino-acid polypeptide reads, in one-letter code: 4-hydroxythreonine-4-phosphate dehydrogenase (328 aa).

Substrate-binding residues include His134 and Thr135. Positions 164, 209, and 265 each coordinate a divalent metal cation. Residues Lys273, Asn282, and Arg291 each contribute to the substrate site.

It belongs to the PdxA family. In terms of assembly, homodimer. Zn(2+) serves as cofactor. The cofactor is Mg(2+). Requires Co(2+) as cofactor.

It localises to the cytoplasm. The enzyme catalyses 4-(phosphooxy)-L-threonine + NAD(+) = 3-amino-2-oxopropyl phosphate + CO2 + NADH. Its pathway is cofactor biosynthesis; pyridoxine 5'-phosphate biosynthesis; pyridoxine 5'-phosphate from D-erythrose 4-phosphate: step 4/5. Functionally, catalyzes the NAD(P)-dependent oxidation of 4-(phosphooxy)-L-threonine (HTP) into 2-amino-3-oxo-4-(phosphooxy)butyric acid which spontaneously decarboxylates to form 3-amino-2-oxopropyl phosphate (AHAP). The polypeptide is 4-hydroxythreonine-4-phosphate dehydrogenase (Vibrio vulnificus (strain CMCP6)).